The chain runs to 246 residues: MVKPIIAPSILASDFANLGCECHRVINSGAEWLHIDVMDGHFVPNITLGQPIVTSLRRAVPRSQEEEKASGEVARPTAFFDCHMMVEEPEKWVADFAKAGADQFTFHYEATKDPLSLVKLIKENGIKAACAIKPGTPVDVLFELAPYLDMALVMTVEPGFGGQKFMPDMMPKVEALRTKFPHMNIQVDGGLGKETIGVAAKAGANVIVAGTSVFTASDPHEVISFMKEEVRKELKAKHILGDETKH.

Serine 9 is a binding site for substrate. Positions 34, 36, and 83 each coordinate a divalent metal cation. Catalysis depends on aspartate 36, which acts as the Proton acceptor. Residues histidine 83, 159–162 (GFGG), 188–190 (DGG), and 210–212 (GTS) contribute to the substrate site. An a divalent metal cation-binding site is contributed by aspartate 188. Aspartate 188 acts as the Proton donor in catalysis.

It belongs to the ribulose-phosphate 3-epimerase family. It depends on Co(2+) as a cofactor. Fe(2+) serves as cofactor. Requires Mn(2+) as cofactor. The cofactor is Zn(2+).

It carries out the reaction D-ribulose 5-phosphate = D-xylulose 5-phosphate. It functions in the pathway carbohydrate degradation; pentose phosphate pathway; D-xylulose 5-phosphate from D-ribulose 5-phosphate (non-oxidative stage): step 1/1. In terms of biological role, catalyzes the reversible epimerization of D-ribulose 5-phosphate to D-xylulose 5-phosphate. The polypeptide is Ribulose-phosphate 3-epimerase (RPE1) (Candida glabrata (strain ATCC 2001 / BCRC 20586 / JCM 3761 / NBRC 0622 / NRRL Y-65 / CBS 138) (Yeast)).